Consider the following 117-residue polypeptide: Bomanin Bicipital 1 (117 aa).

The signal sequence occupies residues methionine 1 to alanine 20. Disulfide bonds link cysteine 29-cysteine 32 and cysteine 107-cysteine 110.

This sequence belongs to the bomanin family. In terms of tissue distribution, hemolymph (at protein level).

The protein resides in the secreted. Functionally, secreted immune-induced peptide induced by Toll signaling. Has a role in resistance to bacterial and fungal infections. The sequence is that of Bomanin Bicipital 1 from Drosophila melanogaster (Fruit fly).